A 301-amino-acid chain; its full sequence is tRNA dimethylallyltransferase (301 aa).

ATP is bound at residue 9-16 (GPTASGKS). 11–16 (TASGKS) is a substrate binding site. The interaction with substrate tRNA stretch occupies residues 34–37 (DSMQ).

The protein belongs to the IPP transferase family. As to quaternary structure, monomer. The cofactor is Mg(2+).

It carries out the reaction adenosine(37) in tRNA + dimethylallyl diphosphate = N(6)-dimethylallyladenosine(37) in tRNA + diphosphate. Functionally, catalyzes the transfer of a dimethylallyl group onto the adenine at position 37 in tRNAs that read codons beginning with uridine, leading to the formation of N6-(dimethylallyl)adenosine (i(6)A). This is tRNA dimethylallyltransferase from Corynebacterium glutamicum (strain R).